The following is a 102-amino-acid chain: Mini zinc finger protein 1 (102 aa).

The segment covering 1–13 (MMKKRQMVIKQRS) has biased composition (basic residues). The interval 1–34 (MMKKRQMVIKQRSRNSNTSSSWTTTSSSSSSSEI) is disordered. A compositionally biased stretch (low complexity) spans 14-32 (RNSNTSSSWTTTSSSSSSS). A ZF-HD dimerization-type; degenerate zinc finger spans residues 39–88 (YVECQKNHAANIGGYAVDGCREFMAAGVEGTVDALRCAACGCHRNFHRKE).

Homo- and heterodimers. Interacts with ZHD1, ZHD5, ZHD6, ZHD7, ZHD8, ZHD10 and ZHD13. As to expression, mostly expressed in roots and stems, present in siliques and seedlings, and weakly observed in petioles, leaves and flowers.

It localises to the cytoplasm. Functionally, inhibits zinc finger homeodomain (ZHD) transcription factors, such as ZHD5, by interacting with them to prevent both their nuclear localization and their DNA-binding properties. Involved in integrating signals from multiple hormones by preventing the expression of genes involved in gibberellic acid (GA), auxin and brassinosteroid signaling and by promoting the expression of abscisic acid (ABA)-responsive genes. Regulates several development aspects, including photomorphogenesis, apical dominance, longevity, flower morphology and fertility, as well as root and stem elongation. Promotes the formation of ectopic shoot meristems on leaf margins. The polypeptide is Mini zinc finger protein 1 (MIF1) (Arabidopsis thaliana (Mouse-ear cress)).